We begin with the raw amino-acid sequence, 251 residues long: Octanoyltransferase (251 aa).

A BPL/LPL catalytic domain is found at 56–241 (ADTGDEIWVV…NLDGASAAAD (186 aa)). Substrate-binding positions include 96-103 (RGGQITYH), 168-170 (ALG), and 181-183 (GLS). The active-site Acyl-thioester intermediate is C199.

It belongs to the LipB family.

It is found in the cytoplasm. It catalyses the reaction octanoyl-[ACP] + L-lysyl-[protein] = N(6)-octanoyl-L-lysyl-[protein] + holo-[ACP] + H(+). Its pathway is protein modification; protein lipoylation via endogenous pathway; protein N(6)-(lipoyl)lysine from octanoyl-[acyl-carrier-protein]: step 1/2. Functionally, catalyzes the transfer of endogenously produced octanoic acid from octanoyl-acyl-carrier-protein onto the lipoyl domains of lipoate-dependent enzymes. Lipoyl-ACP can also act as a substrate although octanoyl-ACP is likely to be the physiological substrate. This is Octanoyltransferase from Burkholderia orbicola (strain AU 1054).